We begin with the raw amino-acid sequence, 162 residues long: Protein NrdI (162 aa).

Belongs to the NrdI family.

In terms of biological role, probably involved in ribonucleotide reductase function. The chain is Protein NrdI from Streptococcus pyogenes serotype M3 (strain ATCC BAA-595 / MGAS315).